A 363-amino-acid polypeptide reads, in one-letter code: tRNA/tmRNA (uracil-C(5))-methyltransferase (363 aa).

The S-adenosyl-L-methionine site is built by Gln187, Tyr215, Asn220, Glu236, and Asp296. The active-site Nucleophile is the Cys321. Catalysis depends on Glu355, which acts as the Proton acceptor.

This sequence belongs to the class I-like SAM-binding methyltransferase superfamily. RNA M5U methyltransferase family. TrmA subfamily.

The catalysed reaction is uridine(54) in tRNA + S-adenosyl-L-methionine = 5-methyluridine(54) in tRNA + S-adenosyl-L-homocysteine + H(+). It catalyses the reaction uridine(341) in tmRNA + S-adenosyl-L-methionine = 5-methyluridine(341) in tmRNA + S-adenosyl-L-homocysteine + H(+). Dual-specificity methyltransferase that catalyzes the formation of 5-methyluridine at position 54 (m5U54) in all tRNAs, and that of position 341 (m5U341) in tmRNA (transfer-mRNA). The polypeptide is tRNA/tmRNA (uracil-C(5))-methyltransferase (Pseudomonas fluorescens).